Here is a 262-residue protein sequence, read N- to C-terminus: MRFGLNIDHIVTLREVRKTYEPEILEALFIAKNTHKVDLITIHLREDKRHIQNEDVLRLLEISPLPINIECSINAEITDFLCSLKNKPSKVTIVPENRNEVTTEGGLDCSLKGLEEVIRAYHNKGIEVSLFVDPLKDALHFAKEHQVKQVEFHTGVYANLHNALYSNANNQIHAISTLKDKCPKELKEELHNAFLQLRRMSKEAFFMGIVVCAGHGLNYSNVKELLKIPSLRELNIGHSVVSKAVLVGLEKAILEMAQLIKR.

Asn-6 contributes to the 3-amino-2-oxopropyl phosphate binding site. 8–9 contributes to the 1-deoxy-D-xylulose 5-phosphate binding site; that stretch reads DH. Arg-17 contacts 3-amino-2-oxopropyl phosphate. His-43 serves as the catalytic Proton acceptor. Arg-45 and His-50 together coordinate 1-deoxy-D-xylulose 5-phosphate. The active-site Proton acceptor is Glu-70. A 1-deoxy-D-xylulose 5-phosphate-binding site is contributed by Thr-102. The active-site Proton donor is His-215. Residues Gly-216 and 237–238 each bind 3-amino-2-oxopropyl phosphate; that span reads GH.

This sequence belongs to the PNP synthase family. Homooctamer; tetramer of dimers.

The protein resides in the cytoplasm. The enzyme catalyses 3-amino-2-oxopropyl phosphate + 1-deoxy-D-xylulose 5-phosphate = pyridoxine 5'-phosphate + phosphate + 2 H2O + H(+). It functions in the pathway cofactor biosynthesis; pyridoxine 5'-phosphate biosynthesis; pyridoxine 5'-phosphate from D-erythrose 4-phosphate: step 5/5. Catalyzes the complicated ring closure reaction between the two acyclic compounds 1-deoxy-D-xylulose-5-phosphate (DXP) and 3-amino-2-oxopropyl phosphate (1-amino-acetone-3-phosphate or AAP) to form pyridoxine 5'-phosphate (PNP) and inorganic phosphate. This Helicobacter pylori (strain J99 / ATCC 700824) (Campylobacter pylori J99) protein is Pyridoxine 5'-phosphate synthase.